Consider the following 311-residue polypeptide: DNA-directed RNA polymerase subunit alpha (311 aa).

Residues 1–227 are alpha N-terminal domain (alpha-NTD); sequence MAQFQIECVE…NLFCSLRNLD (227 aa). The segment at 242–311 is alpha C-terminal domain (alpha-CTD); the sequence is ISQVLIEELQ…GISLPKEKTD (70 aa).

The protein belongs to the RNA polymerase alpha chain family. As to quaternary structure, in plastids the minimal PEP RNA polymerase catalytic core is composed of four subunits: alpha, beta, beta', and beta''. When a (nuclear-encoded) sigma factor is associated with the core the holoenzyme is formed, which can initiate transcription.

It localises to the plastid. It is found in the chloroplast. The catalysed reaction is RNA(n) + a ribonucleoside 5'-triphosphate = RNA(n+1) + diphosphate. Functionally, DNA-dependent RNA polymerase catalyzes the transcription of DNA into RNA using the four ribonucleoside triphosphates as substrates. The sequence is that of DNA-directed RNA polymerase subunit alpha from Porphyra purpurea (Red seaweed).